The following is a 760-amino-acid chain: Amyloid beta precursor protein binding family B member 2 (760 aa).

2 positions are modified to phosphoserine: S123 and S160. Disordered stretches follow at residues 177–295 (QNLG…LPPG) and 324–351 (PADL…KQPW). Composition is skewed to polar residues over residues 212–230 (NKPQ…SSSP) and 261–275 (SWTT…PSSP). A WW domain is found at 290-322 (PDLPPGWKRVNDIAGTYYWHIPTGTTQWERPVS). Phosphoserine occurs at positions 334, 409, and 412. PID domains follow at residues 413 to 580 (DPEA…LQVD) and 586 to 738 (TELV…VTTN).

In terms of assembly, interacts (via C-terminus) with APP (via C-terminus). Interacts with APLP2 (via cytoplasmic domain). Expressed in the brain, retinal lens and muscle cells (at protein level).

It is found in the endoplasmic reticulum. It localises to the golgi apparatus. The protein localises to the early endosome. Its function is as follows. Plays a role in the maintenance of lens transparency, and may also play a role in muscle cell strength. Involved in hippocampal neurite branching and neuromuscular junction formation, as a result plays a role in spatial memory functioning. Activates transcription of APP. The protein is Amyloid beta precursor protein binding family B member 2 of Mus musculus (Mouse).